The sequence spans 109 residues: Thioredoxin 2 (109 aa).

One can recognise a Thioredoxin domain in the interval 2-109 (SGKYFEATDQ…IAKKLDEHIG (108 aa)). The cysteines at positions 33 and 36 are disulfide-linked.

The protein belongs to the thioredoxin family.

Its function is as follows. Participates in various redox reactions through the reversible oxidation of its active center dithiol to a disulfide and catalyzes dithiol-disulfide exchange reactions. The sequence is that of Thioredoxin 2 (trx2) from Chlorobaculum tepidum (strain ATCC 49652 / DSM 12025 / NBRC 103806 / TLS) (Chlorobium tepidum).